The sequence spans 448 residues: MGKYFGTDGVRGVANRELTPELAFKIGRCGGYVLTKSAERPKVLIGRDTRISGHMLEGALVAGLLSIGAEVMRLGVISTPGVAYLTKALGAQAGIMISASHNPVQDNGIKFFGPDGFKLSDEQEQEIETLIDSPEDMLPRPIGSSLGQVNDYFEGGQKYLQYLKQTIDEDFSGMKIALDCAHGATSSLATYLFADLEADVITMGASPNGLNINEGVGSTHPEALAAFVKEKGADVGLAFDGDGDRLIAVDERGNIVDGDQIMYICAKYLKETGRLKQQTVVSTVMSNLGFYKALEAQGISSVQTAVGDRYVVEEMKKNGYNLGGEQSGHIIFLDYNTTGDGMLTALQLVNIMKIKGKPLSELAGEMKKYPQLLVNVRVTDKEKAMEHEQVKKVIAEVEAEMNGNGRVLVRPSGTEPLVRVMAEAPTEEACRTYVERIADVIRREMGVE.

Catalysis depends on S100, which acts as the Phosphoserine intermediate. S100, D240, D242, and D244 together coordinate Mg(2+). Position 100 is a phosphoserine (S100).

This sequence belongs to the phosphohexose mutase family. Mg(2+) is required as a cofactor. Activated by phosphorylation.

The catalysed reaction is alpha-D-glucosamine 1-phosphate = D-glucosamine 6-phosphate. Catalyzes the conversion of glucosamine-6-phosphate to glucosamine-1-phosphate. The polypeptide is Phosphoglucosamine mutase (Geobacillus thermodenitrificans (strain NG80-2)).